Here is a 569-residue protein sequence, read N- to C-terminus: Proline--tRNA ligase (569 aa).

This sequence belongs to the class-II aminoacyl-tRNA synthetase family. ProS type 1 subfamily. In terms of assembly, homodimer.

Its subcellular location is the cytoplasm. The catalysed reaction is tRNA(Pro) + L-proline + ATP = L-prolyl-tRNA(Pro) + AMP + diphosphate. Catalyzes the attachment of proline to tRNA(Pro) in a two-step reaction: proline is first activated by ATP to form Pro-AMP and then transferred to the acceptor end of tRNA(Pro). As ProRS can inadvertently accommodate and process non-cognate amino acids such as alanine and cysteine, to avoid such errors it has two additional distinct editing activities against alanine. One activity is designated as 'pretransfer' editing and involves the tRNA(Pro)-independent hydrolysis of activated Ala-AMP. The other activity is designated 'posttransfer' editing and involves deacylation of mischarged Ala-tRNA(Pro). The misacylated Cys-tRNA(Pro) is not edited by ProRS. The chain is Proline--tRNA ligase from Campylobacter jejuni subsp. doylei (strain ATCC BAA-1458 / RM4099 / 269.97).